The primary structure comprises 64 residues: Large ribosomal subunit protein bL35 (64 aa).

This sequence belongs to the bacterial ribosomal protein bL35 family.

This is Large ribosomal subunit protein bL35 from Desulforudis audaxviator (strain MP104C).